Consider the following 2067-residue polypeptide: Non-reducing polyketide synthase PKS12 (2067 aa).

The N-terminal acylcarrier protein transacylase (SAT) domain stretch occupies residues 4–241 (FVFGDQSTRF…LPVPIYAPYH (238 aa)). The disordered stretch occupies residues 350–373 (NSMGPKASTSHSSAETQTESSSKN). Over residues 356 to 373 (ASTSHSSAETQTESSSKN) the composition is skewed to polar residues. Positions 373 to 808 (NSKIAIVAMS…GGNSAVLLQD (436 aa)) constitute a Ketosynthase family 3 (KS3) domain. Residues Cys545, His680, and His725 each act as for beta-ketoacyl synthase activity in the active site. Residues 912–1199 (FVFSGQGAQY…VVCSTFLKSS (288 aa)) form a malonyl-CoA:ACP transacylase (MAT) domain region. The active-site For acyl/malonyl transferase activity is the Ser1001. The tract at residues 1297-1433 (QKILQETSLD…CELRLEHPSQ (137 aa)) is N-terminal hotdog fold. One can recognise a PKS/mFAS DH domain in the interval 1297 to 1606 (QKILQETSLD…FQGLPRRVLN (310 aa)). The active-site Proton acceptor; for dehydratase activity is the His1329. The product template (PT) domain stretch occupies residues 1329 to 1604 (HRVNGVKVCT…ITFQGLPRRV (276 aa)). The interval 1460–1606 (LDSMLATGMV…FQGLPRRVLN (147 aa)) is C-terminal hotdog fold. Catalysis depends on Asp1519, which acts as the Proton donor; for dehydratase activity. The segment at 1619 to 1648 (APMGRRDVPPSRMDVPPVRSGEGPPTSAPT) is disordered. Positions 1660-1738 (TSMDSRLRPL…SFKLFLGLVD (79 aa)) constitute a Carrier domain. Position 1698 is an O-(pantetheine 4'-phosphoryl)serine (Ser1698). Residues 1742–1779 (KSSSGSDGSGRSSPAPGIESGATTPPMSEEDQDKIVSS) form a disordered region. Residues 1743–1754 (SSSGSDGSGRSS) show a composition bias toward low complexity. The interval 1781–2065 (SLHQFQASST…YVSAFLARAL (285 aa)) is claisen cyclase domain. Catalysis depends on Ser1875, which acts as the For Claisen cyclase activity.

It carries out the reaction 6 malonyl-CoA + acetyl-CoA + 6 H(+) = naphtopyrone YWA1 + 6 CO2 + 7 CoA + H2O. It participates in pigment biosynthesis. In terms of biological role, non-reducing polyketide synthase; part of the gene cluster that mediates the biosynthesis of aurofusarin, a red mycelium pigment which is acting as a mycotoxin. The first step is performed by the polyketide synthase which condenses one acetyl-CoA and 6 malonyl-CoA units to form the first intermediate, the cyclic heptaketide and yellow pigment YWA1. The C2 hydroxyl group in the pyrone ring of YWA1 is probably formed during ring closure by an aldol-type cyclization reaction. The dehydratase aurZ then acts as the first tailoring enzyme in the aurofusarin biosynthetic pathway by converting YWA1 to nor-rubrofusarin. Nor-rubrofusarin is then methylated to rubrofusarin by the O-methyltransferase aurJ. Rubrofusarin is then transported across the plasma membrane by the rubrofusarin-specific pump aurT for further enzymatic processing by the extracellular complex composed of GIP1, aurF, aurO and aurS to yield aurofusarin. This chain is Non-reducing polyketide synthase PKS12, found in Gibberella zeae (strain ATCC MYA-4620 / CBS 123657 / FGSC 9075 / NRRL 31084 / PH-1) (Wheat head blight fungus).